The following is a 349-amino-acid chain: MSHISFKGCSFLSHLDSFQFDISSCQTIAASLVFATGGLFLLSRGLSFLRALFSIFILPGKSLSSFGPKGSWALVTGASDGIGKEYALQIARKGYNIILVSRSASKLSAVASEITSANPNILTKTVSMDFSENNDEDYEKLKDIIKDLDISILINNVGLSHSIPVPFVQTPEKEMKDIIAINCLGTLRVTQLVAPGMMQRKRGLILTMGSFGGLLPTPLLATYSGSKAFLQHWSTALASELEPYNIHVQLVVSYLVTSAMSKVRKASMTIPNPKAFVRSTLNHLGRSGGLFSYSHTSVPYWTHGLMAWGITSFLGAMSKTVLGINKSMHESIRQRALRKAARESGKKAQ.

The chain crosses the membrane as a helical span at residues 29-49 (AASLVFATGGLFLLSRGLSFL). Positions 74, 129, 137, 156, 223, 227, 256, and 258 each coordinate NADP(+). Tyrosine 223 (proton donor) is an active-site residue. The active-site Lowers pKa of active site Tyr is the lysine 227.

The protein belongs to the short-chain dehydrogenases/reductases (SDR) family.

The protein resides in the endoplasmic reticulum membrane. It carries out the reaction a very-long-chain (3R)-3-hydroxyacyl-CoA + NADP(+) = a very-long-chain 3-oxoacyl-CoA + NADPH + H(+). Its pathway is lipid metabolism; fatty acid biosynthesis. In terms of biological role, component of the microsomal membrane bound fatty acid elongation system, which produces the 26-carbon very long-chain fatty acids (VLCFA) from palmitate. Catalyzes the reduction of the 3-ketoacyl-CoA intermediate that is formed in each cycle of fatty acid elongation. VLCFAs serve as precursors for ceramide and sphingolipids. This Coccidioides immitis (strain RS) (Valley fever fungus) protein is Very-long-chain 3-oxoacyl-CoA reductase.